We begin with the raw amino-acid sequence, 499 residues long: Thioredoxin reductase 1, cytoplasmic (499 aa).

FAD is bound by residues 22–23, 42–43, 58–59, and 63–67; these read SG, DF, TC, and GCIPK. The cysteines at positions 59 and 64 are disulfide-linked. Position 68 is an N6-succinyllysine (K68). Position 131 is a phosphotyrosine (Y131). FAD contacts are provided by residues 131–132 and T161; that span reads YG. Residues R166, 198 to 204, 221 to 222, R226, 226 to 228, 292 to 293, and K315 contribute to the NADP(+) site; these read ASYVALE, RS, RGF, and GR. Y200 contacts FAD. Residues D334, 341-343, and H472 each bind FAD; that span reads ELT. Residue E341 participates in NADP(+) binding. Catalysis depends on H472, which acts as the Proton acceptor. Residues 497–498 constitute a cross-link (cysteinyl-selenocysteine (Cys-Sec)); it reads CU. Position 498 (U498) is a non-standard amino acid, selenocysteine.

This sequence belongs to the class-I pyridine nucleotide-disulfide oxidoreductase family. In terms of assembly, homodimer. FAD serves as cofactor. In terms of processing, ISGylated.

It localises to the cytoplasm. It carries out the reaction [thioredoxin]-dithiol + NADP(+) = [thioredoxin]-disulfide + NADPH + H(+). The catalysed reaction is H2O2 + NADPH + H(+) = NADP(+) + 2 H2O. In terms of biological role, reduces disulfideprotein thioredoxin (Trx) to its dithiol-containing form. Homodimeric flavoprotein involved in the regulation of cellular redox reactions, growth and differentiation. Contains a selenocysteine residue at the C-terminal active site that is essential for catalysis. Also has reductase activity on hydrogen peroxide (H2O2). The protein is Thioredoxin reductase 1, cytoplasmic (TXNRD1) of Bos taurus (Bovine).